Reading from the N-terminus, the 280-residue chain is Serine protease 33 (280 aa).

Positions methionine 1–glycine 22 are cleaved as a signal peptide. The Peptidase S1 domain occupies isoleucine 37–serine 279. An intrachain disulfide couples cysteine 62 to cysteine 78. Catalysis depends on charge relay system residues histidine 77 and aspartate 126. 3 cysteine pairs are disulfide-bonded: cysteine 160–cysteine 237, cysteine 193–cysteine 216, and cysteine 227–cysteine 255. Serine 231 (charge relay system) is an active-site residue.

This sequence belongs to the peptidase S1 family. In terms of tissue distribution, predominantly expressed in macrophages. Present in the spleen, small and large intestine, lung and brain (at protein level). Highly expressed in peripheral leukocytes, ovary, retina, spleen and stomach. Moderately expressed in thymus, uterus and platelets, as well as some brain tissues, such as thalamus and fetal brain.

It localises to the secreted. Serine protease that has amidolytic activity, cleaving its substrates before Arg residues. The polypeptide is Serine protease 33 (PRSS33) (Homo sapiens (Human)).